The chain runs to 425 residues: UPF0761 membrane protein PXO_04555 (425 aa).

The next 6 membrane-spanning stretches (helical) occupy residues 48–68 (VFAL…FPAF), 105–125 (FTVA…HSIE), 154–174 (GTML…LPLF), 182–202 (LAEF…IVLI), 219–239 (GALL…VYLG), and 250–270 (ALSA…SVLL).

It belongs to the UPF0761 family.

The protein resides in the cell inner membrane. This is UPF0761 membrane protein PXO_04555 from Xanthomonas oryzae pv. oryzae (strain PXO99A).